Reading from the N-terminus, the 173-residue chain is Crossover junction endodeoxyribonuclease RuvC (173 aa).

Active-site residues include aspartate 8, glutamate 67, and aspartate 139. 3 residues coordinate Mg(2+): aspartate 8, glutamate 67, and aspartate 139.

This sequence belongs to the RuvC family. Homodimer which binds Holliday junction (HJ) DNA. The HJ becomes 2-fold symmetrical on binding to RuvC with unstacked arms; it has a different conformation from HJ DNA in complex with RuvA. In the full resolvosome a probable DNA-RuvA(4)-RuvB(12)-RuvC(2) complex forms which resolves the HJ. Mg(2+) serves as cofactor.

The protein resides in the cytoplasm. The catalysed reaction is Endonucleolytic cleavage at a junction such as a reciprocal single-stranded crossover between two homologous DNA duplexes (Holliday junction).. Its function is as follows. The RuvA-RuvB-RuvC complex processes Holliday junction (HJ) DNA during genetic recombination and DNA repair. Endonuclease that resolves HJ intermediates. Cleaves cruciform DNA by making single-stranded nicks across the HJ at symmetrical positions within the homologous arms, yielding a 5'-phosphate and a 3'-hydroxyl group; requires a central core of homology in the junction. The consensus cleavage sequence is 5'-(A/T)TT(C/G)-3'. Cleavage occurs on the 3'-side of the TT dinucleotide at the point of strand exchange. HJ branch migration catalyzed by RuvA-RuvB allows RuvC to scan DNA until it finds its consensus sequence, where it cleaves and resolves the cruciform DNA. This Baumannia cicadellinicola subsp. Homalodisca coagulata protein is Crossover junction endodeoxyribonuclease RuvC.